The primary structure comprises 1479 residues: Peroxidasin homolog (1479 aa).

Positions 1 to 26 are cleaved as a signal peptide; sequence MAKRSRGPGRRCLLALVLFCAWGTLA. Residues 27-63 form the LRRNT domain; it reads VVAQKPGAGCPSRCLCFRTTVRCMHLLLEAVPAVAPQ. 2 disulfides stabilise this stretch: C36–C42 and C40–C49. LRR repeat units lie at residues 61-84, 85-108, 110-132, 133-156, 157-180, and 182-204; these read APQT…AFRR, LRNL…AFED, ENLK…AFKG, LASL…SFQH, LPKL…TFNH, and ESMK…LWLA. Residues 192 to 244 enclose the LRRCT domain; the sequence is NTLHCDCEILWLADLLKTYAESGNAQAAAICEYPRRIQGRSVATITPEELNCE. Intrachain disulfides connect C196/C243, C198/C222, C267/C317, C363/C412, C454/C502, and C546/C594. Ig-like C2-type domains lie at 246–332, 342–428, 433–520, and 521–610; these read PRIT…QEVT, PTFV…AFII, PQFT…LTVQ, and PRVT…MVLS. N-linked (GlcNAc...) asparagine glycans are attached at residues N640, N699, N719, and N731. 4 disulfides stabilise this stretch: C723-C885, C732-C748, C847-C857, and C851-C875. Position 826 (D826) interacts with heme b. H827 (proton acceptor) is an active-site residue. Position 828 (D828) interacts with Ca(2+). The N-linked (GlcNAc...) asparagine glycan is linked to N865. Residues T907, Y909, D911, and S913 each contribute to the Ca(2+) site. C959 and C970 are oxidised to a cystine. N964 is a glycosylation site (N-linked (GlcNAc...) asparagine). E980 and H1074 together coordinate heme b. The stretch at 1151 to 1175 is one LRR 7 repeat; it reads ALDLAAINIQRGRDHGIPPYHDYRV. Y1176 carries the post-translational modification Phosphotyrosine. 2 disulfides stabilise this stretch: C1177–C1234 and C1275–C1301. A glycan (N-linked (GlcNAc...) asparagine) is linked at N1178. A Phosphoserine modification is found at S1180. One copy of the LRR 8 repeat lies at 1270–1291; it reads LARILCDNADNITRVQSDVFRV. N-linked (GlcNAc...) asparagine glycosylation is found at N1280, N1368, and N1425. The required in homotrimerization stretch occupies residues 1315–1411; it reads CCEDCRTRGQ…QIKKLESRLS (97 aa). Positions 1342 to 1380 are disordered; that stretch reads YQEDKPTKKTRPRKIPSVGRQGEHLSNSTSAFSTRSDAS. The span at 1365–1380 shows a compositional bias: polar residues; the sequence is HLSNSTSAFSTRSDAS. The 59-residue stretch at 1413–1471 folds into the VWFC domain; that stretch reads TECVDAGGESHANNTKWKKDACTICECKDGQVTCFVEACPPATCAVPVNIPGACCPVCL.

It belongs to the peroxidase family. XPO subfamily. As to quaternary structure, homotrimer; disulfide-linked. The homotrimer form is predominant. Homooligomer; disulfide-linked. Oligomerization occurs intracellularly before C-terminal proteolytic cleavage. Interacts with PXDNL; this interaction inhibits the peroxidase activity of PXDN. The cofactor is Ca(2+). Heme b is required as a cofactor. In terms of processing, glycosylated. Four sites are completely N-glycosylated (Asn-640, Asn-731, Asn-865 and Asn-1425), whereas the others are found partially glycosylated. Post-translationally, processed by FURIN and the proteolytic processing largely depends on the peroxidase activity of PXDN. The proteolytic cleavage occurs after intracellular homotrimerization and releases into the extracellular matrix a large, catalytically active fragment and a smaller fragment consisting primarily of the C-terminal VWFC domain. The processing enhances both peroxidase activity and sulfilimine cross-links formation. Expressed at higher levels in heart, lung, ovary, spleen, intestine and placenta, and at lower levels in liver, colon, pancreas, kidney, thymus, skeletal muscle and prostate. Expressed in tumors such as melanoma, breast cancer, ovarian cancer and glioblastoma. A shorter form probably lacking the signal sequence is found in testis and in EB1 cells undergoing p53/TP53-dependent apoptosis.

Its subcellular location is the secreted. The protein resides in the extracellular space. It is found in the extracellular matrix. The protein localises to the endoplasmic reticulum. It localises to the cell surface. Its subcellular location is the basement membrane. The enzyme catalyses L-lysyl-[collagen] + L-methionyl-[collagen] + H2O2 = [collagen]-L-lysyl-N-S-L-methionyl-[collagen] + 2 H2O + H(+). The catalysed reaction is bromide + H2O2 = hypobromite + H2O. It catalyses the reaction L-lysyl-[collagen] + L-methionyl-[collagen] + hypobromite = [collagen]-L-lysyl-N-S-L-methionyl-[collagen] + bromide + H2O + H(+). It carries out the reaction L-tyrosyl-[protein] + bromide + H2O2 + H(+) = 3-bromo-L-tyrosyl-[protein] + 2 H2O. The enzyme catalyses hypobromite + L-tyrosyl-[protein] + H(+) = 3-bromo-L-tyrosyl-[protein] + H2O. With respect to regulation, the hypobromous acid formation is activated by increasing nitrite concentrations and inhibited by increasing urate concentrations. Functionally, catalyzes the two-electron oxidation of bromide by hydrogen peroxide and generates hypobromite as a reactive intermediate which mediates the formation of sulfilimine cross-links between methionine and hydroxylysine residues within an uncross-linked collagen IV/COL4A1 NC1 hexamer. In turns, directly contributes to the collagen IV network-dependent fibronectin/FN and laminin assembly, which is required for full extracellular matrix (ECM)-mediated signaling. Thus, sulfilimine cross-links are essential for growth factor-induced cell proliferation and survival in endothelial cells, an event essential to basement membrane integrity. In addition, through the bromide oxidation, may promote tubulogenesis and induce angiogenesis through ERK1/2, Akt, and FAK pathways. Moreover brominates alpha2 collagen IV chain/COL4A2 at 'Tyr-1485' and leads to bromine enrichment of the basement membranes. In vitro, can also catalyze the two-electron oxidation of thiocyanate and iodide and these two substrates could effectively compete with bromide and thus inhibit the formation of sulfilimine bonds. Binds laminins. May play a role in the organization of eyeball structure and lens development during eye development. This chain is Peroxidasin homolog, found in Homo sapiens (Human).